The sequence spans 131 residues: Fumarate reductase subunit C (131 aa).

3 helical membrane passes run Glu30–Leu50, Ala58–Ile78, and Ile109–Leu129.

Belongs to the FrdC family. Part of an enzyme complex containing four subunits: a flavoprotein (FrdA), an iron-sulfur protein (FrdB), and two hydrophobic anchor proteins (FrdC and FrdD).

It is found in the cell inner membrane. Its function is as follows. Two distinct, membrane-bound, FAD-containing enzymes are responsible for the catalysis of fumarate and succinate interconversion; fumarate reductase is used in anaerobic growth, and succinate dehydrogenase is used in aerobic growth. Anchors the catalytic components of the fumarate reductase complex to the cell inner membrane, binds quinones. The polypeptide is Fumarate reductase subunit C (Proteus mirabilis (strain HI4320)).